A 311-amino-acid chain; its full sequence is Dehydrogenase/reductase SDR family member 7C (311 aa).

A signal peptide spans 1–18 (MGLMAVLMLPLLLLGISG). Residues serine 47, leucine 49, tyrosine 191, lysine 195, and serine 226 each coordinate NAD(+). Tyrosine 191 acts as the Proton acceptor in catalysis.

The protein belongs to the short-chain dehydrogenases/reductases (SDR) family. In terms of tissue distribution, expressed in skeletal muscle and cardiac muscle. Also expressed in liver, kidney, adipocytes and skin.

It is found in the sarcoplasmic reticulum membrane. The enzyme catalyses all-trans-retinol + NAD(+) = all-trans-retinal + NADH + H(+). Functionally, NADH-dependent oxidoreductase which catalyzes the oxidation of all-trans-retinol to all-trans-retinal. Plays a role in the regulation of cardiac and skeletal muscle metabolic functions. Maintains Ca(2+) intracellular homeostasis by repressing Ca(2+) release from the sarcoplasmic reticulum (SR) in myotubes, possibly through local alternations in NAD/NADH or retinol/retinal. Also plays a role in Ca(2+) homeostasis by controlling Ca(2+) overload in the cytosol and the SR in myotubes. Involved in glucose uptake into skeletal muscles and muscle performance by activating PI3K and mTORC2-mediated AKT1 phosphorylation signaling pathways, possibly through the action of its downstream catalytic product all-trans-retinoic acid. This is Dehydrogenase/reductase SDR family member 7C from Mus musculus (Mouse).